The sequence spans 466 residues: Ribulose bisphosphate carboxylase large chain (466 aa).

At lysine 5 the chain carries N6,N6,N6-trimethyllysine. 2 residues coordinate substrate: asparagine 114 and threonine 164. Lysine 166 serves as the catalytic Proton acceptor. Lysine 168 is a binding site for substrate. Residues lysine 192, aspartate 194, and glutamate 195 each contribute to the Mg(2+) site. N6-carboxylysine is present on lysine 192. Catalysis depends on histidine 285, which acts as the Proton acceptor. Residues arginine 286, histidine 318, and serine 370 each coordinate substrate.

It belongs to the RuBisCO large chain family. Type I subfamily. In terms of assembly, heterohexadecamer of 8 large chains and 8 small chains; disulfide-linked. The disulfide link is formed within the large subunit homodimers. It depends on Mg(2+) as a cofactor. In terms of processing, the disulfide bond which can form in the large chain dimeric partners within the hexadecamer appears to be associated with oxidative stress and protein turnover.

It localises to the plastid. It is found in the chloroplast. The enzyme catalyses 2 (2R)-3-phosphoglycerate + 2 H(+) = D-ribulose 1,5-bisphosphate + CO2 + H2O. The catalysed reaction is D-ribulose 1,5-bisphosphate + O2 = 2-phosphoglycolate + (2R)-3-phosphoglycerate + 2 H(+). Functionally, ruBisCO catalyzes two reactions: the carboxylation of D-ribulose 1,5-bisphosphate, the primary event in carbon dioxide fixation, as well as the oxidative fragmentation of the pentose substrate in the photorespiration process. Both reactions occur simultaneously and in competition at the same active site. The polypeptide is Ribulose bisphosphate carboxylase large chain (Adoxa moschatellina (Moschatel)).